A 145-amino-acid polypeptide reads, in one-letter code: Large ribosomal subunit protein uL15 (145 aa).

A compositionally biased stretch (basic and acidic residues) spans 1-18 (MKLHELKYTEGSKKDVTR). The tract at residues 1–51 (MKLHELKYTEGSKKDVTRVGRGMASGKGKTSTRGHKGQNSRSGGGVRVGFE) is disordered. Residues 42 to 51 (SGGGVRVGFE) are compositionally biased toward gly residues.

This sequence belongs to the universal ribosomal protein uL15 family. In terms of assembly, part of the 50S ribosomal subunit.

Functionally, binds to the 23S rRNA. This is Large ribosomal subunit protein uL15 from Mesoplasma florum (strain ATCC 33453 / NBRC 100688 / NCTC 11704 / L1) (Acholeplasma florum).